Reading from the N-terminus, the 503-residue chain is Anhydrotetracycline monooxygenase (503 aa).

This sequence belongs to the PheA/TfdB FAD monooxygenase family. The cofactor is FAD.

The catalysed reaction is anhydrotetracycline + NADPH + O2 + H(+) = 5a,11a-dehydrotetracycline + NADP(+) + H2O. The protein operates within antibiotic biosynthesis; oxytetracycline biosynthesis. Its function is as follows. Catalyzes hydroxylation of the anthracycline structure at position C-6 during the biosynthesis of oxytetracyline. The protein is Anhydrotetracycline monooxygenase of Streptomyces rimosus.